The sequence spans 144 residues: Gonadotropin subunit beta-2 (144 aa).

The signal sequence occupies residues 1–27; that stretch reads MGTPVKILVVRNHILFSVVVLLAVAQS. Disulfide bonds link C33/C81, C47/C96, C50/C134, C58/C112, C62/C114, and C117/C124. N37 carries N-linked (GlcNAc...) asparagine glycosylation. The propeptide occupies 143 to 144; the sequence is VY.

This sequence belongs to the glycoprotein hormones subunit beta family. In terms of assembly, heterodimer of an alpha and a beta chain.

The protein resides in the secreted. Its function is as follows. Involved in gametogenesis and steroidogenesis. The sequence is that of Gonadotropin subunit beta-2 (cgbb) from Cyprinus carpio (Common carp).